We begin with the raw amino-acid sequence, 196 residues long: Agamous-like MADS-box protein AGL70 (196 aa).

The MADS-box domain occupies 1 to 61 (MGRRKVEIKR…GKLYDSASGD (61 aa)). The Nuclear localization signal signature appears at 8–15 (IKRIENKS). Positions 80 to 170 (ALDLAEKIRN…ASQVGKKTFL (91 aa)) constitute a K-box domain.

As to expression, mostly expressed in roots, leaves and flowers, and, to a lower extent, in inflorescence, siliques, pollen and shoots.

The protein localises to the nucleus. Functionally, probable transcription factor involved in the negative regulation of flowering time, probably through the photoperiodic and vernalization pathways; more efficient in cv. Landsberg erecta than in cv. Columbia background. Prevents premature flowering. Involved in the modulation of vernalization impact on flowering according to genotype acclimation to altitude. The chain is Agamous-like MADS-box protein AGL70 from Arabidopsis thaliana (Mouse-ear cress).